The primary structure comprises 440 residues: Thymidine phosphorylase (440 aa).

The protein belongs to the thymidine/pyrimidine-nucleoside phosphorylase family. As to quaternary structure, homodimer.

It catalyses the reaction thymidine + phosphate = 2-deoxy-alpha-D-ribose 1-phosphate + thymine. It participates in pyrimidine metabolism; dTMP biosynthesis via salvage pathway; dTMP from thymine: step 1/2. In terms of biological role, the enzymes which catalyze the reversible phosphorolysis of pyrimidine nucleosides are involved in the degradation of these compounds and in their utilization as carbon and energy sources, or in the rescue of pyrimidine bases for nucleotide synthesis. The protein is Thymidine phosphorylase of Escherichia coli O127:H6 (strain E2348/69 / EPEC).